A 518-amino-acid polypeptide reads, in one-letter code: 2-isopropylmalate synthase (518 aa).

Residues 24–275 (VYIFDTTLRD…KTNIKTQKLY (252 aa)) enclose the Pyruvate carboxyltransferase domain. Residues D33, H213, H215, and N249 each contribute to the a divalent metal cation site.

It belongs to the alpha-IPM synthase/homocitrate synthase family. As to quaternary structure, homodimer. The cofactor is a divalent metal cation.

The catalysed reaction is 3-methyl-2-oxobutanoate + acetyl-CoA + H2O = (2S)-2-isopropylmalate + CoA + H(+). Its pathway is amino-acid biosynthesis; L-leucine biosynthesis; L-leucine from 3-methyl-2-oxobutanoate: step 1/4. Catalyzes the condensation of the acetyl group of acetyl-CoA with 3-methyl-2-oxobutanoate (2-oxoisovalerate) to form 3-carboxy-3-hydroxy-4-methylpentanoate (2-isopropylmalate). The sequence is that of 2-isopropylmalate synthase (leuA) from Methanocaldococcus jannaschii (strain ATCC 43067 / DSM 2661 / JAL-1 / JCM 10045 / NBRC 100440) (Methanococcus jannaschii).